Reading from the N-terminus, the 516-residue chain is GMP synthase [glutamine-hydrolyzing] (516 aa).

Residues 7 to 203 enclose the Glutamine amidotransferase type-1 domain; the sequence is SVIVLDFGSQ…LIDIAGITPD (197 aa). Cys84 serves as the catalytic Nucleophile. Active-site residues include His177 and Glu179. A GMPS ATP-PPase domain is found at 204-391; it reads WSPKSFIQHQ…LGIAEDILMR (188 aa). Position 231-237 (231-237) interacts with ATP; it reads SGGVDST.

Homodimer.

The catalysed reaction is XMP + L-glutamine + ATP + H2O = GMP + L-glutamate + AMP + diphosphate + 2 H(+). It participates in purine metabolism; GMP biosynthesis; GMP from XMP (L-Gln route): step 1/1. Catalyzes the synthesis of GMP from XMP. The chain is GMP synthase [glutamine-hydrolyzing] from Chlorobaculum tepidum (strain ATCC 49652 / DSM 12025 / NBRC 103806 / TLS) (Chlorobium tepidum).